We begin with the raw amino-acid sequence, 182 residues long: Nucleosome assembly protein 1-like 5 (182 aa).

Residues 1 to 71 (MADSENQGPA…APKPKNDFIE (71 aa)) are disordered. Composition is skewed to low complexity over residues 7–21 (QGPAEPSQAAAAAEA) and 28–49 (AEGGAQGGDCDSAAGDPDSAAG). Residues 81 to 107 (VLALKKLQKRCDKIEAKFDKEFQALEK) are a coiled coil. The tract at residues 134–182 (LEGEEEEEEEYEDDEEEGEDEEEEEAAAEAAAGAKHDDAHAEMPDDAKK) is disordered. Acidic residues predominate over residues 135–160 (EGEEEEEEEYEDDEEEGEDEEEEEAA). Residues 167-182 (AKHDDAHAEMPDDAKK) show a composition bias toward basic and acidic residues.

This sequence belongs to the nucleosome assembly protein (NAP) family. As to expression, predominantly expressed in brain.

It localises to the nucleus. This is Nucleosome assembly protein 1-like 5 (NAP1L5) from Homo sapiens (Human).